We begin with the raw amino-acid sequence, 94 residues long: PTS system galactitol-specific EIIB component (94 aa).

One can recognise a PTS EIIB type-2 domain in the interval 1 to 94 (MKRKIIVACG…QNKILTILQG (94 aa)). The Phosphocysteine intermediate; for EIIB activity role is filled by C9. C9 bears the Phosphocysteine; by EIIA mark.

Forms a complex with one each of subunit of GatA, GatB and 2 subunits of GatC.

It localises to the cytoplasm. The enzyme catalyses galactitol(out) + N(pros)-phospho-L-histidyl-[protein] = galactitol 1-phosphate(in) + L-histidyl-[protein]. Its function is as follows. The phosphoenolpyruvate-dependent sugar phosphotransferase system (PTS), a major carbohydrate active transport system, catalyzes the phosphorylation of incoming sugar substrates concomitant with their translocation across the cell membrane. The enzyme II complex composed of GatA, GatB and GatC is involved in galactitol transport. This Escherichia coli O157:H7 protein is PTS system galactitol-specific EIIB component (gatB).